Consider the following 171-residue polypeptide: 3-hydroxydecanoyl-[acyl-carrier-protein] dehydratase (171 aa).

His70 is an active-site residue.

It belongs to the thioester dehydratase family. FabA subfamily. In terms of assembly, homodimer.

Its subcellular location is the cytoplasm. The catalysed reaction is a (3R)-hydroxyacyl-[ACP] = a (2E)-enoyl-[ACP] + H2O. The enzyme catalyses (3R)-hydroxydecanoyl-[ACP] = (2E)-decenoyl-[ACP] + H2O. It catalyses the reaction (2E)-decenoyl-[ACP] = (3Z)-decenoyl-[ACP]. It functions in the pathway lipid metabolism; fatty acid biosynthesis. In terms of biological role, necessary for the introduction of cis unsaturation into fatty acids. Catalyzes the dehydration of (3R)-3-hydroxydecanoyl-ACP to E-(2)-decenoyl-ACP and then its isomerization to Z-(3)-decenoyl-ACP. Can catalyze the dehydratase reaction for beta-hydroxyacyl-ACPs with saturated chain lengths up to 16:0, being most active on intermediate chain length. The protein is 3-hydroxydecanoyl-[acyl-carrier-protein] dehydratase of Pseudomonas putida (strain W619).